Consider the following 144-residue polypeptide: Large ribosomal subunit protein uL15 (144 aa).

The tract at residues 1-57 (MKLNDLSPAPGSRREKHRPGRGIGSGLGKTGGRGHKGQTSRSGGSIAPGFEGGQQPL) is disordered. Residues 21–31 (RGIGSGLGKTG) show a composition bias toward gly residues.

Belongs to the universal ribosomal protein uL15 family. As to quaternary structure, part of the 50S ribosomal subunit.

Functionally, binds to the 23S rRNA. The polypeptide is Large ribosomal subunit protein uL15 (Pseudomonas putida (strain ATCC 700007 / DSM 6899 / JCM 31910 / BCRC 17059 / LMG 24140 / F1)).